The sequence spans 429 residues: Serine--tRNA ligase (429 aa).

235–237 lines the L-serine pocket; that stretch reads TAE. 266–268 contacts ATP; it reads RSE. Glu-289 is an L-serine binding site. 353 to 356 is an ATP binding site; that stretch reads EISS. Ser-389 is a binding site for L-serine.

This sequence belongs to the class-II aminoacyl-tRNA synthetase family. Type-1 seryl-tRNA synthetase subfamily. As to quaternary structure, homodimer. The tRNA molecule binds across the dimer.

It localises to the cytoplasm. The catalysed reaction is tRNA(Ser) + L-serine + ATP = L-seryl-tRNA(Ser) + AMP + diphosphate + H(+). The enzyme catalyses tRNA(Sec) + L-serine + ATP = L-seryl-tRNA(Sec) + AMP + diphosphate + H(+). The protein operates within aminoacyl-tRNA biosynthesis; selenocysteinyl-tRNA(Sec) biosynthesis; L-seryl-tRNA(Sec) from L-serine and tRNA(Sec): step 1/1. Catalyzes the attachment of serine to tRNA(Ser). Is also able to aminoacylate tRNA(Sec) with serine, to form the misacylated tRNA L-seryl-tRNA(Sec), which will be further converted into selenocysteinyl-tRNA(Sec). The chain is Serine--tRNA ligase from Haemophilus influenzae (strain PittEE).